We begin with the raw amino-acid sequence, 853 residues long: MSTIENLTAHTPMMQQYLKLKAQHPEILLFYRMGDFYELFYDDAKRASQLLDISLTKRGASAGEPIPMAGIPHHAVENYLAKLVNQGESVAICEQIGDPATSKGPVERKVVRIVTPGTISDEALLQERQDNLLAAIWQDSKGYGYAALDISSGRFRLSEPADRETMAAELQRTNPAELLYAEDFAEMALIDGRRGLRRRPLWEFEIDTARQQLNLQFGTRDLIGFGVENAPRGLCAAGCLLQYVKDTQRTTLPHIRSITMERQQDSIIMDAATRRNLEITQNLAGGVENTLAAVLDSTVTPMGSRMLKRWLHMPVRDTNVLVSRQQTIGALQDRFTELQPVLRQVGDLERILARLALRTARPRDLARMRHAFQQLPTLRAQLAEVNSTPVQKLRETMGEFTELCELLERAVVEAPPVLVRDGGVIAPGYHEELDEWRALADGATDYLDKLEIRERERLGLDTLKVGYNAIHGYYIQISRGQSHHAPIHYVRRQTLKNAERYIIPELKEYEDKVLTSKGKALALEKQLYEELFDMLMPHLADLQASASALAELDVLINLAERADTLNYACPTFIDKPGIRITEGRHPVVEQVLREPFIANPLNLSPQRRMLIITGPNMGGKSTYMRQTALIALLAYIGSYVPAQKVEIGPIDRIFTRVGAADDLASGRSTFMVEMTETANILHNATENSLVLMDEIGRGTSTYDGLSLAWACAESLANKIKALTLFATHYFELTQLPEKMEGVANVHLDALEHGDTIAFMHTVQDGAASKSYGLAVAALAGVPKEVIKRARQKLRELESLSPNAAATQVDGSQMSLLMPAEETSPAMEALENLDPDSLTPRQALEWIYRLKNLV.

614–621 contacts ATP; that stretch reads GPNMGGKS.

Belongs to the DNA mismatch repair MutS family.

Its function is as follows. This protein is involved in the repair of mismatches in DNA. It is possible that it carries out the mismatch recognition step. This protein has a weak ATPase activity. The sequence is that of DNA mismatch repair protein MutS from Enterobacter sp. (strain 638).